Reading from the N-terminus, the 456-residue chain is tRNA modification GTPase MnmE (456 aa).

(6S)-5-formyl-5,6,7,8-tetrahydrofolate-binding residues include Arg26, Glu86, and Arg125. Residues 222–376 (GLSTAIIGRP…IEDRINQLFF (155 aa)) form the TrmE-type G domain. Asn232 contributes to the K(+) binding site. GTP is bound by residues 232–237 (NVGKSS), 251–257 (TDIEGTT), and 276–279 (DTAG). Ser236 contributes to the Mg(2+) binding site. Residues Thr251, Ile253, and Thr256 each contribute to the K(+) site. Thr257 lines the Mg(2+) pocket. Lys456 is a (6S)-5-formyl-5,6,7,8-tetrahydrofolate binding site.

It belongs to the TRAFAC class TrmE-Era-EngA-EngB-Septin-like GTPase superfamily. TrmE GTPase family. Homodimer. Heterotetramer of two MnmE and two MnmG subunits. The cofactor is K(+).

It localises to the cytoplasm. Its function is as follows. Exhibits a very high intrinsic GTPase hydrolysis rate. Involved in the addition of a carboxymethylaminomethyl (cmnm) group at the wobble position (U34) of certain tRNAs, forming tRNA-cmnm(5)s(2)U34. The sequence is that of tRNA modification GTPase MnmE from Streptococcus thermophilus (strain CNRZ 1066).